The following is a 313-amino-acid chain: Ribosomal RNA small subunit methyltransferase H (313 aa).

S-adenosyl-L-methionine is bound by residues G35–H37, D55, F79, D101, and Q108. The segment at Q276–A300 is disordered.

The protein belongs to the methyltransferase superfamily. RsmH family.

The protein localises to the cytoplasm. The enzyme catalyses cytidine(1402) in 16S rRNA + S-adenosyl-L-methionine = N(4)-methylcytidine(1402) in 16S rRNA + S-adenosyl-L-homocysteine + H(+). In terms of biological role, specifically methylates the N4 position of cytidine in position 1402 (C1402) of 16S rRNA. The polypeptide is Ribosomal RNA small subunit methyltransferase H (Dickeya chrysanthemi (strain Ech1591) (Dickeya zeae (strain Ech1591))).